We begin with the raw amino-acid sequence, 591 residues long: Oxaloacetate decarboxylase alpha chain (591 aa).

The 261-residue stretch at 3–263 folds into the Pyruvate carboxyltransferase domain; it reads IAITDVVLRD…DTGLDILKLE (261 aa). The Biotinyl-binding domain occupies 518–591; sequence PAGAGTPVTA…SVGDTLMTLA (74 aa). At Lys557 the chain carries N6-biotinyllysine.

Composed of three chains (alpha, beta, and gamma). Biotin serves as cofactor.

The catalysed reaction is oxaloacetate + 2 Na(+)(in) + H(+) = pyruvate + 2 Na(+)(out) + CO2. In terms of biological role, catalyzes the decarboxylation of oxaloacetate coupled to Na(+) translocation. The polypeptide is Oxaloacetate decarboxylase alpha chain (oadA1) (Salmonella typhi).